The chain runs to 256 residues: MSDSAVATSASPVAAPPATVEKKVVQKKASGSAGTKAKKASATPSHPPTQQMVDASIKNLKERGGSSLLAIKKYITATYKCDAQKLAPFIKKYLKSAVVNGKLIQTKGKGASGSFKLSASAKKEKDPKAKSKVLSAEKKVQSKKVASKKIGVSSKKTAVGAADKKPKAKKAVATKKTAENKKTEKAKAKDAKKTGIIKSKPAATKAKVTAAKPKAVVAKASKAKPAVSAKPKKTVKKASVSATAKKPKAKTTAAKK.

Composition is skewed to low complexity over residues 1 to 19 (MSDSAVATSASPVAAPPAT) and 27 to 43 (KKASGSAGTKAKKASAT). Disordered stretches follow at residues 1–53 (MSDS…QQMV) and 108–256 (GKGA…AAKK). Ser-11 is modified (phosphoserine). Positions 45–119 (SHPPTQQMVD…GASGSFKLSA (75 aa)) constitute an H15 domain. Composition is skewed to basic and acidic residues over residues 121 to 140 (AKKEKDPKAKSKVLSAEKKV) and 176 to 193 (KTAENKKTEKAKAKDAKK). Positions 194-229 (TGIIKSKPAATKAKVTAAKPKAVVAKASKAKPAVSA) are enriched in low complexity. Positions 245 to 256 (KKPKAKTTAAKK) are enriched in basic residues.

Belongs to the histone H1/H5 family. Phosphorylated in oocytes during prophase I of meiosis.

The protein localises to the nucleus. The protein resides in the chromosome. Functionally, histones H1 are necessary for the condensation of nucleosome chains into higher-order structures. This Drosophila melanogaster (Fruit fly) protein is Histone H1 (His1).